We begin with the raw amino-acid sequence, 176 residues long: Large ribosomal subunit protein uL6 (176 aa).

The protein belongs to the universal ribosomal protein uL6 family. As to quaternary structure, part of the 50S ribosomal subunit.

Its function is as follows. This protein binds to the 23S rRNA, and is important in its secondary structure. It is located near the subunit interface in the base of the L7/L12 stalk, and near the tRNA binding site of the peptidyltransferase center. The protein is Large ribosomal subunit protein uL6 of Lactobacillus gasseri (strain ATCC 33323 / DSM 20243 / BCRC 14619 / CIP 102991 / JCM 1131 / KCTC 3163 / NCIMB 11718 / NCTC 13722 / AM63).